Here is a 157-residue protein sequence, read N- to C-terminus: Transcription elongation factor GreA (157 aa).

The stretch at 12–74 (LKKLEEELEY…TLEAMLKNAK (63 aa)) forms a coiled coil.

This sequence belongs to the GreA/GreB family.

Functionally, necessary for efficient RNA polymerase transcription elongation past template-encoded arresting sites. The arresting sites in DNA have the property of trapping a certain fraction of elongating RNA polymerases that pass through, resulting in locked ternary complexes. Cleavage of the nascent transcript by cleavage factors such as GreA or GreB allows the resumption of elongation from the new 3'terminus. GreA releases sequences of 2 to 3 nucleotides. In Caldanaerobacter subterraneus subsp. tengcongensis (strain DSM 15242 / JCM 11007 / NBRC 100824 / MB4) (Thermoanaerobacter tengcongensis), this protein is Transcription elongation factor GreA.